The chain runs to 526 residues: Keratin, type I cytoskeletal 10 (526 aa).

The span at 1–16 shows a compositional bias: low complexity; that stretch reads MSVRFSSNSRQYSSAR. The interval 1-40 is disordered; that stretch reads MSVRFSSNSRQYSSARSGGGGGGGGGGSSIRVSSTKSSLG. Positions 1-144 are head; it reads MSVRFSSNSR…GDGGGLLSGN (144 aa). Residues serine 17, serine 38, serine 49, serine 52, and serine 169 each carry the phosphoserine modification. The span at 17–28 shows a compositional bias: gly residues; sequence SGGGGGGGGGGS. Positions 145–180 are coil 1A; that stretch reads EKVTMQNLNDRLASYMNKVRDLEESNYELEGKIKEW. The region spanning 145–459 is the IF rod domain; sequence EKVTMQNLND…SLLEGEGGYV (315 aa). The tract at residues 181–201 is linker 1; it reads YEKHGNSSQREPRDYSKYYKT. Residues 202 to 293 form a coil 1B region; sequence IEDLKGQIVN…KNHEEEMKDL (92 aa). The tract at residues 294–316 is linker 12; that stretch reads QNVSTGDVNVEMNAAPGVDLTQL. A coil 2 region spans residues 317-455; the sequence is LNNMRNQYEQ…QTYRSLLEGE (139 aa). Positions 456 to 526 are tail; it reads GGYVGNLQIT…IESETKKHFY (71 aa).

The protein belongs to the intermediate filament family. As to quaternary structure, heterotetramer of two type I and two type II keratins. Heterodimer with KRT1. Two heterodimers of KRT1 and KRT10 form a heterotetramer. The KRT10 subunit in the heterotetramer is probably disulfide-linked.

The protein localises to the secreted. It is found in the extracellular space. The protein resides in the cell surface. It localises to the cytoplasm. Its function is as follows. Plays a role in the establishment of the epidermal barrier on plantar skin. Involved in the maintenance of cell layer development and keratin filament bundles in suprabasal cells of the epithelium. In Rattus norvegicus (Rat), this protein is Keratin, type I cytoskeletal 10.